Consider the following 550-residue polypeptide: Carboxylesterase 4A (550 aa).

The N-terminal stretch at 1-20 is a signal peptide; that stretch reads MNWILCLSLTLLLVVQTAWG. Residues cysteine 88 and cysteine 116 are joined by a disulfide bond. Serine 221 acts as the Acyl-ester intermediate in catalysis. Cysteine 273 and cysteine 284 are disulfide-bonded. N-linked (GlcNAc...) asparagine glycosylation is present at asparagine 276. The active-site Charge relay system is the glutamate 353. The N-linked (GlcNAc...) asparagine glycan is linked to asparagine 386. The active-site Charge relay system is histidine 465.

This sequence belongs to the type-B carboxylesterase/lipase family.

It is found in the secreted. Functionally, probable carboxylesterase. The chain is Carboxylesterase 4A (CES4A) from Bos taurus (Bovine).